A 73-amino-acid polypeptide reads, in one-letter code: Mauriporin (73 aa).

The signal sequence occupies residues 1-22 (MNKKTLLVIFFITMLIVDEVNS).

This sequence belongs to the non-disulfide-bridged peptide (NDBP) superfamily. Long chain multifunctional peptide (group 2) family. In terms of tissue distribution, expressed by the venom gland.

The protein localises to the secreted. The protein resides in the target cell membrane. Functionally, amphipathic peptide that displays potent antimicrobial activities against a range of Gram-positive and Gram-negative planktonic bacteria with MIC values in the range 5 uM to 10 uM. In more details, it is active on Listeria ivanovii (MIC=5 uM), Staphylococcus epidermidis (MIC=10 uM), Salmonella enterica (MIC=5 uM), Pseudomonas aeruginosa (ATCC 27853) (MIC=5 uM), Acinetobacter baumannii (MIC=5 uM), Klebsiella pneumoniae (MIC=5 uM), Escherichia coli (MIC=7.5 uM), Salmonella typhimurium (MIC=7.5 uM), Pseudomonas aeruginosa (ATCC 9027) (MIC=10 uM). Is also able to prevent P.aeruginosa biofilm formation while showing weak hemolytic activity towards human erythrocytes. Probably induces bacterial cell death through membrane permeabilization. Moreover, shows DNA-binding activities. Also exerts potent selective cytotoxic and antiproliferative activity against three different prostate cancer cell lines (IC(50)=4.4-7.8 uM), compared to non-tumorigenic cell lines (IC(50)=59.7 uM in Vero and 62.5 uM in HUVEC cells). This peptide possibly exerts its cytotoxic activity through a necrotic mode of cell death. Only shows diminished hemolytic activity against sheep erythrocytes. Does not induce cell death through apoptosis and consequently is not acting upon an intracellular target. The polypeptide is Mauriporin (Androctonus mauritanicus (Fat-tailed scorpion)).